Reading from the N-terminus, the 999-residue chain is Receptor-like protein kinase 5 (999 aa).

A signal peptide spans 1 to 14 (MLYCLILLLCLSST). Residues 15–621 (YLPSLSLNQD…LCRKITRSKN (607 aa)) are Extracellular-facing. LRR repeat units follow at residues 90 to 112 (SLHS…DFDT), 115 to 137 (NLIS…LPFN), 140 to 161 (NLKF…SFGE), 164 to 186 (KLES…LGNV), and 188 to 208 (TLKE…PSQL). N98 and N102 each carry an N-linked (GlcNAc...) asparagine glycan. Residues N150 and N185 are each glycosylated (N-linked (GlcNAc...) asparagine). N210 carries an N-linked (GlcNAc...) asparagine glycan. LRR repeat units lie at residues 213–236 (ELQV…SRLT) and 237–259 (SLVN…ITQL). N-linked (GlcNAc...) asparagine glycans are attached at residues N269 and N282. LRR repeat units lie at residues 285–307 (TLKR…LNLL), 308–330 (NLES…ITRS), 332–353 (TLSE…QLGA), 356–378 (PLQY…VCGE), 380–402 (KLEY…LGKC), 404–427 (SLTR…WGLP), 428–450 (RLSL…IIGA), 452–474 (NLSN…IGSL), 500–523 (QLSR…RGWK), 524–546 (NLNE…VGIL), 548–569 (VLNY…ELQN), and 571–593 (KLNV…YANK). An N-linked (GlcNAc...) asparagine glycan is attached at N452. N-linked (GlcNAc...) asparagine glycosylation is present at N576. A helical membrane pass occupies residues 622-641 (IGYVWILLTIFLLAGLVFVV). The Cytoplasmic portion of the chain corresponds to 642-999 (GIVMFIAKCR…PYYTEDLNSV (358 aa)). The Protein kinase domain occupies 683–968 (LDEKNVIGFG…KVVIMLQEVS (286 aa)). Residues 689 to 697 (IGFGSSGKV) and K711 each bind ATP. Residues Y766 and Y806 each carry the phosphotyrosine modification. D819 serves as the catalytic Proton acceptor. At S856 the chain carries Phosphoserine. Residues Y864 and Y871 each carry the phosphotyrosine modification. A Phosphothreonine modification is found at T872. Residues 972–999 (PCSSPNTSKRSKTGGKLSPYYTEDLNSV) form a disordered region.

Belongs to the protein kinase superfamily. Ser/Thr protein kinase family. Interacts with CST. Binds to IDA. It depends on Mg(2+) as a cofactor. Requires Mn(2+) as cofactor. Post-translationally, autophosphorylated on Ser, Thr and Tyr residues. As to expression, expressed in roots and rosettes. Expressed at the base of petioles and pedicels, and in the abscission zones of the floral organs.

The protein localises to the cell membrane. It carries out the reaction L-seryl-[protein] + ATP = O-phospho-L-seryl-[protein] + ADP + H(+). The catalysed reaction is L-threonyl-[protein] + ATP = O-phospho-L-threonyl-[protein] + ADP + H(+). It catalyses the reaction L-tyrosyl-[protein] + ATP = O-phospho-L-tyrosyl-[protein] + ADP + H(+). Functionally, receptor with a dual specificity kinase activity acting on both serine/threonine- and tyrosine-containing substrates that controls floral organ abscission. May interact with the 'INFLORESCENCE DEFICIENT IN ABSCISSION' (IDA) ligands family. This chain is Receptor-like protein kinase 5 (RLK5), found in Arabidopsis thaliana (Mouse-ear cress).